The chain runs to 792 residues: Cadherin-11 (792 aa).

The N-terminal stretch at 1 to 22 (MKEDNCLHAALICLGMLYYSHA) is a signal peptide. Residues 23 to 53 (ITTEKLNHVRPSLHGHHEKGKEGQVLHRSKR) constitute a propeptide that is removed on maturation. 5 Cadherin domains span residues 54–159 (GWVW…PPEF), 160–268 (LHEN…PPKF), 269–383 (PQSV…PPVF), 384–486 (LKPS…DNAP), and 487–608 (KFAA…YILN). The Extracellular segment spans residues 54–613 (GWVWNQFFVI…AYILNAGLST (560 aa)). N-linked (GlcNAc...) asparagine glycans are attached at residues asparagine 455, asparagine 536, and asparagine 594. A helical transmembrane segment spans residues 614–634 (GALIAILACIVILLVIVVLFV). Residues 635–792 (TLKRQKKEPL…GSKDTFDDDS (158 aa)) are Cytoplasmic-facing.

It is found in the cell membrane. In terms of biological role, cadherins are calcium-dependent cell adhesion proteins. They preferentially interact with themselves in a homophilic manner in connecting cells; cadherins may thus contribute to the sorting of heterogeneous cell types. Required for proper focal adhesion assembly. Involved in the regulation of cell migration. In Gallus gallus (Chicken), this protein is Cadherin-11 (CDH11).